Here is a 159-residue protein sequence, read N- to C-terminus: Keratin-associated protein 9-8 (159 aa).

Repeat copies occupy residues 8–12 (CCQPT), 13–17 (CCRTT), 32–36 (CCQPS), 37–41 (CCVSS), 46–50 (CCRPT), 51–55 (CCQNT), 56–60 (CCQPI), 65–69 (CCQPS), 70–74 (CCSTP), 75–79 (CCQPT), 80–84 (CCGQT), 129–133 (CCRPA), 134–138 (CCETT), 139–142 (CCRT), and 153–157 (CCQPS). Residues 8-157 (CCQPTCCRTT…TCVSSCCQPS (150 aa)) are 15 X 5 AA repeats of C-C-[RQVSGE]-[SPSNQ]-[TASPI].

The protein belongs to the KRTAP type 9 family. As to quaternary structure, interacts with hair keratins.

Its function is as follows. In the hair cortex, hair keratin intermediate filaments are embedded in an interfilamentous matrix, consisting of hair keratin-associated proteins (KRTAP), which are essential for the formation of a rigid and resistant hair shaft through their extensive disulfide bond cross-linking with abundant cysteine residues of hair keratins. The matrix proteins include the high-sulfur and high-glycine-tyrosine keratins. In Homo sapiens (Human), this protein is Keratin-associated protein 9-8 (KRTAP9-8).